The sequence spans 194 residues: NADPH-flavin oxidoreductase (194 aa).

It belongs to the non-flavoprotein flavin reductase family. In terms of assembly, homodimer. It can form an isobutylamine N-hydroxylase two component enzyme system formed of a flavin reductase component (VlmR) and a monooxygenase component (VlmH).

It carries out the reaction FADH2 + NADP(+) = FAD + NADPH + 2 H(+). The catalysed reaction is FMNH2 + NADP(+) = FMN + NADPH + 2 H(+). Functionally, involved in the biosynthesis of the azoxy antibiotic valanimycin, which has an antitumor activity. Catalyzes the reduction of FAD/FMN to FADH(2)/FMNH(2) which are subsequently used for the hydroxylation of isobutylamine by the isobutylamine N-hydroxylase VlmH. It can reduce either FAD or flavin mononucleotide (FMN) but prefers FAD. The enzyme has a strong preference for NADPH as acceptor. The protein is NADPH-flavin oxidoreductase of Streptomyces viridifaciens.